A 220-amino-acid chain; its full sequence is MKVHKEGTGLLLTLFTILFIVNITLYHTVGKGMLFYSVAFVSTVLFLLVLNFFRSPFRRFPYDSEGLVIAPADGTIVAIEEVMENEILHKKCLQISIFMSIFNVHANWFPVNGTVKHVSHQNGRFMAAYLPKSSTENERSAVVITTRNGVDVLARQIAGAMARRIVTYAKPGEKCHVDEQMGFIKFGSRVDVYLPVGTEVLIEMDQKVTGNQTPIARLSK.

Ser188 functions as the Schiff-base intermediate with substrate; via pyruvic acid in the catalytic mechanism. Residue Ser188 is modified to Pyruvic acid (Ser); by autocatalysis.

This sequence belongs to the phosphatidylserine decarboxylase family. PSD-A subfamily. As to quaternary structure, heterodimer of a large membrane-associated beta subunit and a small pyruvoyl-containing alpha subunit. Requires pyruvate as cofactor. Is synthesized initially as an inactive proenzyme. Formation of the active enzyme involves a self-maturation process in which the active site pyruvoyl group is generated from an internal serine residue via an autocatalytic post-translational modification. Two non-identical subunits are generated from the proenzyme in this reaction, and the pyruvate is formed at the N-terminus of the alpha chain, which is derived from the carboxyl end of the proenzyme. The post-translation cleavage follows an unusual pathway, termed non-hydrolytic serinolysis, in which the side chain hydroxyl group of the serine supplies its oxygen atom to form the C-terminus of the beta chain, while the remainder of the serine residue undergoes an oxidative deamination to produce ammonia and the pyruvoyl prosthetic group on the alpha chain.

The protein resides in the cell membrane. It carries out the reaction a 1,2-diacyl-sn-glycero-3-phospho-L-serine + H(+) = a 1,2-diacyl-sn-glycero-3-phosphoethanolamine + CO2. Its pathway is phospholipid metabolism; phosphatidylethanolamine biosynthesis; phosphatidylethanolamine from CDP-diacylglycerol: step 2/2. Functionally, catalyzes the formation of phosphatidylethanolamine (PtdEtn) from phosphatidylserine (PtdSer). The chain is Phosphatidylserine decarboxylase proenzyme from Parabacteroides distasonis (strain ATCC 8503 / DSM 20701 / CIP 104284 / JCM 5825 / NCTC 11152).